Reading from the N-terminus, the 421-residue chain is Vinorine synthase (421 aa).

Residues His-160 and Asp-362 each act as proton acceptor in the active site.

Belongs to the plant acyltransferase family. In terms of assembly, monomer. As to expression, mainly expressed in roots and, to a lower level, in leaves.

It catalyses the reaction 16-epivellosimine + acetyl-CoA = vinorine + CoA. Its pathway is alkaloid biosynthesis; ajmaline biosynthesis. With respect to regulation, complete inhibition by 4-(2-aminoethyl)-benzenesulfonyl fluoride (AEBSF), N-tosyl-L-phenylalanine chloromethylketone (TPCK), Hg(2+) and diethyl-pyrocarbonate (DEPC). 50% inhibition by N-(N-(L-3-trans-carboxirane-2-carbonyl)-L-leucyl)-agmanitine (E-64), N-alpha-p-tosyl-L-lysine chloromethylketone (TLCK) and phenylmethylsulfonyl fluoride (PMSF). Its function is as follows. Acetyltransferase involved in the biosynthesis of ajmaline-type monoterpenoid indole alkaloids (MIAs) natural products, important plant-derived pharmaceuticals used in the therapy of heart disorders. Catalyzes the conversion of 16-epivellosimine to vinorine, precursor of vomilenine, an intermediate chemical in the biosynthesis of ajmaline. Acts on gardneral, but not on polyneuridine aldehyde or N-methylgardneral. This Rauvolfia serpentina (Serpentine wood) protein is Vinorine synthase.